Reading from the N-terminus, the 114-residue chain is Protein ORF3 (114 aa).

The interval 1–28 is membrane association; that stretch reads MGSRPCALGLFCCCSSCFCLCCPRHRPV. Hydrophobic stretches follow at residues 6–22 and 33–53; these read CALG…CLCC and AAVG…GLIL. Residues 6-22 are induction of host SIRPA expression; the sequence is CALGLFCCCSSCFCLCC. The tract at residues 28–68 is interaction with host HPX; that stretch reads VSRLAAAVGGAAAVPAVVSGVTGLILSPSQSPIFIQPTPSP. The segment at 48–72 is interaction with the capsid protein; that stretch reads VTGLILSPSQSPIFIQPTPSPPMSP. At Ser71 the chain carries Phosphoserine; by host. The homodimerization, and interaction with host AMBP/bikunin stretch occupies residues 72 to 114; sequence PLRPGLDLVFANPPDHSAPLGVTRPSAPPLPHVVDLPQLGPRR. The tract at residues 91 to 114 is disordered; the sequence is LGVTRPSAPPLPHVVDLPQLGPRR. The interval 95-104 is interaction with host SRC, HCK, FYN, PIK3R3 and GRB2; the sequence is RPSAPPLPHV. A PTAP/PSAP motif motif is present at residues 96–99; sequence PSAP.

This sequence belongs to the hepevirus ORF3 protein family. As to quaternary structure, forms homooligomers. Interacts with host SRC, HCK, FYN, PIK3R3 and GRB2 (via SH3 domain); binding does not activate the kinases. Interacts with host AMBP/bikunin and AMBP/alpha-1-microglobulin peptides. Interacts with host HPX/hemopexin. Interacts (when phosphorylated) with capsid protein ORF2. Interacts with host TSG101; this interaction plays a role in viral release from the host cell. Interacts with host SIRPA; this interaction down-regulates the phosphorylation of host IRF3. In terms of processing, palmitoylated in the N-terminus.

Its subcellular location is the host endoplasmic reticulum membrane. The protein resides in the host cytoplasm. It is found in the host cytoskeleton. The protein localises to the virion. It localises to the host cell membrane. In terms of biological role, small multifunctional phosphoprotein involved in virion morphogenesis, egress and counteracting host innate immunity. Plays critical roles in the final steps of viral release by interacting with host TSG101, a member of the vacuolar protein-sorting pathway and using other cellular host proteins involved in vesicle formation pathway. Also acts as a viroporin and forms ion conductive pores allowing viral particle release. Impairs the generation of type I interferon by down-regulating host TLR3 and TLR7 as well as their downstream signaling pathways. Down-regulates the phosphorylation of host IRF3 via the interaction with host SIRP-alpha, thereby inhibiting IFN-I expression. Interacts with host microtubules. The protein is Protein ORF3 of Hepatitis E virus genotype 1 (isolate Human/China/HeBei/1987) (HEV).